The sequence spans 593 residues: Pentatricopeptide repeat-containing protein At5g24830 (593 aa).

PPR repeat units lie at residues 120 to 154 (CLSI…GVIP), 155 to 189 (GLIT…GPSP), 190 to 224 (NCVS…GIRP), 225 to 256 (NRVT…ILDS), 264 to 298 (DIVI…NVPA), 299 to 333 (DSVV…GVNP), 334 to 368 (DVFT…GVAP), 369 to 403 (DQIS…SLLP), 404 to 438 (EVLL…GVKP), 439 to 473 (NVYT…KIHP), 474 to 508 (DTTT…GCQP), and 509 to 543 (DIIT…GITI).

The protein belongs to the PPR family. P subfamily.

This is Pentatricopeptide repeat-containing protein At5g24830 from Arabidopsis thaliana (Mouse-ear cress).